The primary structure comprises 663 residues: Innate immunity activator protein (663 aa).

The tract at residues 1–73 is disordered; it reads MLQMPKLNEI…PGPGWDQCSP (73 aa). Positions 23–47 are enriched in low complexity; sequence EGRWAGPTGPEAARPARGARGQARG. Residues 50–59 are compositionally biased toward basic and acidic residues; the sequence is ARWDSWEHSR. Residues 117-147 are a coiled coil; sequence NAVRKQQRALEARLEACLEELRRLCLREAEL. The Nuclear localization signal (NLS) 1 motif lies at 164–170; it reads PKVRRRI. Disordered stretches follow at residues 219–363 and 375–405; these read RQRK…SSLW and IRNVPGQRQGRTSAPATPEMQGRRGQSQSLR. A compositionally biased stretch (basic and acidic residues) spans 225–246; it reads ALQEEKKLRDLQRCLGDRRRNS. A compositionally biased stretch (low complexity) spans 259–272; sequence ELSASDDSSLSDGL. Positions 282 to 298 are enriched in pro residues; sequence PKPPPESPAPPSRPLPP. Residues 327–340 are compositionally biased toward basic and acidic residues; the sequence is TSLDHPYEKPRKSS. The short motif at 332 to 338 is the Nuclear localization signal (NLS) 2 element; sequence PYEKPRK. A compositionally biased stretch (polar residues) spans 349–361; sequence PATTPQDQPNPSS. Residues 422 to 428 carry the Nuclear localization signal (NLS) 3 motif; sequence PRRRPTH. The interval 448–483 is disordered; sequence PACHSCSEDSGSDVSSISHPTSPGSSSPDISFLRPL. A compositionally biased stretch (low complexity) spans 455-475; sequence EDSGSDVSSISHPTSPGSSSP.

Interacts with IRAK1, NOD2 and RIPK2; the interaction takes place upon PRR stimulation. Interacts with YWHAQ/14-3-3T; the interaction increases upon PRR stimulation and is required for cellular signaling pathway activation and cytokine secretion. Interacts (via N-terminal domain) with CYTH1 and CYTH2 (via their N-terminal domains). Interacts with FBXW11 and BTRC; associates with SCF E3 ubiquitin-protein ligase complexes.

Its subcellular location is the nucleus. It is found in the cytoplasm. Functionally, expressed in peripheral macrophages and intestinal myeloid-derived cells, is required for optimal PRR (pattern recognition receptor)-induced signaling, cytokine secretion, and bacterial clearance. Upon stimulation of a broad range of PRRs (pattern recognition receptor) such as NOD2 or TLR2, TLR3, TLR4, TLR5, TLR7 and TLR9, associates with YWHAQ/14-3-3T, which in turn leads to the recruitment and activation of MAP kinases and NF-kappa-B signaling complexes that amplifies PRR-induced downstream signals and cytokine secretion. In the intestine, regulates adherens junction stability by regulating the degradation of CYTH1 and CYTH2, probably acting as substrate cofactor for SCF E3 ubiquitin-protein ligase complexes. Stabilizes adherens junctions by limiting CYTH1-dependent ARF6 activation. This is Innate immunity activator protein from Mus musculus (Mouse).